The primary structure comprises 338 residues: Anthranilate phosphoribosyltransferase (338 aa).

Residues Gly78, 81–82 (GD), Ser86, 88–91 (NIST), 106–114 (KHGNRSITS), and Ser118 contribute to the 5-phospho-alpha-D-ribose 1-diphosphate site. Residue Gly78 coordinates anthranilate. Ser90 contributes to the Mg(2+) binding site. Residue Asn109 coordinates anthranilate. Arg163 contributes to the anthranilate binding site. 2 residues coordinate Mg(2+): Asp222 and Glu223.

This sequence belongs to the anthranilate phosphoribosyltransferase family. Homodimer. Mg(2+) serves as cofactor.

It carries out the reaction N-(5-phospho-beta-D-ribosyl)anthranilate + diphosphate = 5-phospho-alpha-D-ribose 1-diphosphate + anthranilate. It functions in the pathway amino-acid biosynthesis; L-tryptophan biosynthesis; L-tryptophan from chorismate: step 2/5. In terms of biological role, catalyzes the transfer of the phosphoribosyl group of 5-phosphorylribose-1-pyrophosphate (PRPP) to anthranilate to yield N-(5'-phosphoribosyl)-anthranilate (PRA). This chain is Anthranilate phosphoribosyltransferase, found in Staphylococcus haemolyticus (strain JCSC1435).